We begin with the raw amino-acid sequence, 445 residues long: Cytoplasmic tRNA 2-thiolation protein 2 (445 aa).

Over residues 1 to 11 (MCSIGEDDFGD) the composition is skewed to acidic residues. The segment at 1 to 26 (MCSIGEDDFGDEGGVHAMKEESPLPE) is disordered. Positions 13-22 (GGVHAMKEES) are enriched in basic and acidic residues.

This sequence belongs to the CTU2/NCS2 family.

It is found in the cytoplasm. It participates in tRNA modification; 5-methoxycarbonylmethyl-2-thiouridine-tRNA biosynthesis. Plays a central role in 2-thiolation of mcm(5)S(2)U at tRNA wobble positions of tRNA(Lys), tRNA(Glu) and tRNA(Gln). May act by forming a heterodimer with NCS6/CTU1 that ligates sulfur from thiocarboxylated URM1 onto the uridine of tRNAs at wobble position. This chain is Cytoplasmic tRNA 2-thiolation protein 2, found in Aedes aegypti (Yellowfever mosquito).